The primary structure comprises 534 residues: GTPase Obg (534 aa).

The Obg domain maps to 2 to 159 (ASFVDRVVLH…SDIVLELKSI (158 aa)). Residues 63 to 82 (APHRHASNGGQGMGDWRGGK) form a disordered region. Gly residues predominate over residues 71–82 (GGQGMGDWRGGK). Residues 160-343 (ADIALVGFPS…LSFAMAELVT (184 aa)) enclose the OBG-type G domain. Residues 166–173 (GFPSAGKS), 191–195 (FTTLI), 212–215 (DVPG), 295–298 (NKID), and 324–326 (SAS) each bind GTP. Mg(2+)-binding residues include serine 173 and threonine 193. Residues 363-449 (PRAVNRKEFT…ENAVVFDWEP (87 aa)) enclose the OCT domain. The segment at 456–534 (ELLSGPRGTD…AASTDDGDAL (79 aa)) is disordered. Basic and acidic residues-rich tracts occupy residues 464–504 (TDPR…ERKA) and 512–526 (SARR…REAA).

Belongs to the TRAFAC class OBG-HflX-like GTPase superfamily. OBG GTPase family. As to quaternary structure, monomer. Requires Mg(2+) as cofactor.

The protein localises to the cytoplasm. In terms of biological role, an essential GTPase which binds GTP, GDP and possibly (p)ppGpp with moderate affinity, with high nucleotide exchange rates and a fairly low GTP hydrolysis rate. Plays a role in control of the cell cycle, stress response, ribosome biogenesis and in those bacteria that undergo differentiation, in morphogenesis control. This is GTPase Obg from Renibacterium salmoninarum (strain ATCC 33209 / DSM 20767 / JCM 11484 / NBRC 15589 / NCIMB 2235).